The primary structure comprises 309 residues: Ankyrin repeat and SOCS box protein 12 (309 aa).

5 ANK repeats span residues 63 to 92, 96 to 125, 129 to 158, 171 to 200, and 213 to 243; these read VPGTPLRLAASYGHLSCLQVLLAHGADVDS, KAQTPLFTAVSHGHLDCVRVLLEAGASPGG, NNCSPVLTAARDGAVAILQELLDHGAEANV, SCSGPLYLAAVYGHLDCFRLLLLHGADPDY, and RPRTLLEICLHHNCEPEYIQLLIDFGANIYL. The SOCS box domain occupies 268 to 308; it reads PRSLLSQVRLVVRRALCQAGQPQAINQLDIPPMLISYLKHQ.

Belongs to the ankyrin SOCS box (ASB) family. In terms of assembly, interacts with CUL5 and RNF7.

The protein operates within protein modification; protein ubiquitination. Functionally, probable substrate-recognition component of a SCF-like ECS (Elongin-Cullin-SOCS-box protein) E3 ubiquitin-protein ligase complex which mediates the ubiquitination and subsequent proteasomal degradation of target proteins. The polypeptide is Ankyrin repeat and SOCS box protein 12 (ASB12) (Homo sapiens (Human)).